The chain runs to 153 residues: MRLNTIKPGMGSTKPRRRVGRGIGSGLGKTCGRGHKGQKSRAGGFHKIGFEGGQMPLQRRLPKRGFVVYGKKQIQEIKLSSLLLIDRNEFDTSVLHEFNLIKSINYPVKIIADAQACTRAIRLKDLRVTRGVKDIVEHAGGQVELTIEDVNGI.

The segment at 1-42 (MRLNTIKPGMGSTKPRRRVGRGIGSGLGKTCGRGHKGQKSRA) is disordered. Over residues 21 to 31 (RGIGSGLGKTC) the composition is skewed to gly residues.

This sequence belongs to the universal ribosomal protein uL15 family. Part of the 50S ribosomal subunit.

Its function is as follows. Binds to the 23S rRNA. This is Large ribosomal subunit protein uL15 from Nitrosomonas eutropha (strain DSM 101675 / C91 / Nm57).